The following is a 290-amino-acid chain: Release factor glutamine methyltransferase (290 aa).

Positions 140 and 181 each coordinate S-adenosyl-L-methionine. 181–184 provides a ligand contact to substrate; that stretch reads NPPY.

This sequence belongs to the protein N5-glutamine methyltransferase family. PrmC subfamily.

It carries out the reaction L-glutaminyl-[peptide chain release factor] + S-adenosyl-L-methionine = N(5)-methyl-L-glutaminyl-[peptide chain release factor] + S-adenosyl-L-homocysteine + H(+). Its function is as follows. Methylates the class 1 translation termination release factors RF1/PrfA and RF2/PrfB on the glutamine residue of the universally conserved GGQ motif. This is Release factor glutamine methyltransferase from Chlamydia trachomatis serovar D (strain ATCC VR-885 / DSM 19411 / UW-3/Cx).